Reading from the N-terminus, the 236-residue chain is Biosynthetic peptidoglycan transglycosylase (236 aa).

The helical transmembrane segment at 17–37 (IVILVALALLALPYLLTILYG) threads the bilayer.

The protein belongs to the glycosyltransferase 51 family.

The protein resides in the cell inner membrane. The enzyme catalyses [GlcNAc-(1-&gt;4)-Mur2Ac(oyl-L-Ala-gamma-D-Glu-L-Lys-D-Ala-D-Ala)](n)-di-trans,octa-cis-undecaprenyl diphosphate + beta-D-GlcNAc-(1-&gt;4)-Mur2Ac(oyl-L-Ala-gamma-D-Glu-L-Lys-D-Ala-D-Ala)-di-trans,octa-cis-undecaprenyl diphosphate = [GlcNAc-(1-&gt;4)-Mur2Ac(oyl-L-Ala-gamma-D-Glu-L-Lys-D-Ala-D-Ala)](n+1)-di-trans,octa-cis-undecaprenyl diphosphate + di-trans,octa-cis-undecaprenyl diphosphate + H(+). It functions in the pathway cell wall biogenesis; peptidoglycan biosynthesis. Functionally, peptidoglycan polymerase that catalyzes glycan chain elongation from lipid-linked precursors. The chain is Biosynthetic peptidoglycan transglycosylase from Rhodopseudomonas palustris (strain ATCC BAA-98 / CGA009).